The primary structure comprises 130 residues: Small ribosomal subunit protein uS9 (130 aa).

It belongs to the universal ribosomal protein uS9 family.

The polypeptide is Small ribosomal subunit protein uS9 (Streptococcus uberis (strain ATCC BAA-854 / 0140J)).